The sequence spans 434 residues: 3-phosphoshikimate 1-carboxyvinyltransferase (434 aa).

Residues Lys15, Ser16, and Arg20 each contribute to the 3-phosphoshikimate site. A phosphoenolpyruvate-binding site is contributed by Lys15. Phosphoenolpyruvate-binding residues include Gly96 and Arg124. 3-phosphoshikimate contacts are provided by Ser169, Gln171, Ser195, Asp319, and Lys346. Gln171 contributes to the phosphoenolpyruvate binding site. The active-site Proton acceptor is Asp319. 2 residues coordinate phosphoenolpyruvate: Arg350 and Arg394.

It belongs to the EPSP synthase family. Monomer.

The protein localises to the cytoplasm. It carries out the reaction 3-phosphoshikimate + phosphoenolpyruvate = 5-O-(1-carboxyvinyl)-3-phosphoshikimate + phosphate. It participates in metabolic intermediate biosynthesis; chorismate biosynthesis; chorismate from D-erythrose 4-phosphate and phosphoenolpyruvate: step 6/7. Catalyzes the transfer of the enolpyruvyl moiety of phosphoenolpyruvate (PEP) to the 5-hydroxyl of shikimate-3-phosphate (S3P) to produce enolpyruvyl shikimate-3-phosphate and inorganic phosphate. The protein is 3-phosphoshikimate 1-carboxyvinyltransferase of Chlorobium phaeobacteroides (strain DSM 266 / SMG 266 / 2430).